Consider the following 117-residue polypeptide: Minor capsid protein p17 (117 aa).

Asn12 carries N-linked (GlcNAc...) asparagine; by host glycosylation. A helical membrane pass occupies residues 39 to 59; it reads AILLGILILLVIILIIVAIVY. Positions 96-117 are disordered; that stretch reads KNSTSQQSHIPSDEQLAELAHS. Asn97 carries an N-linked (GlcNAc...) asparagine; by host glycan.

The protein belongs to the asfivirus minor capsid protein p17 family. In terms of assembly, interacts with the minor capsid protein M1249L and with the hexon capsid protein p72 capsomers; these interactions form a rigid zipper structure that stabilizes the capsomers. Interacts with host STING1.

Its subcellular location is the virion membrane. It is found in the host endoplasmic reticulum membrane. Functionally, together with the penton and the other minor capsid proteins (M1249L, p49), forms a complicated network immediately below the outer capsid shell, stabilizing the whole capsid. Three copies of p17 encircle each p72 capsomer in the inner capsid shell, anchoring p72 capsomers on the inner membrane. Required for the assembly of the capsid and icosahedral morphogenesis. Additionally, inhibits the host cGAS-STING pathway through its interaction with STING1 and subsequent interference of the recruitment of downstream components TBK1 and IKBKE. The polypeptide is Minor capsid protein p17 (African swine fever virus (isolate Tick/South Africa/Pretoriuskop Pr4/1996) (ASFV)).